The following is a 310-amino-acid chain: Ribosomal RNA small subunit methyltransferase H (310 aa).

Residues 32–34, Asp-51, Phe-84, Asp-102, and Gln-109 each bind S-adenosyl-L-methionine; that span reads AGH.

Belongs to the methyltransferase superfamily. RsmH family.

It is found in the cytoplasm. The catalysed reaction is cytidine(1402) in 16S rRNA + S-adenosyl-L-methionine = N(4)-methylcytidine(1402) in 16S rRNA + S-adenosyl-L-homocysteine + H(+). Its function is as follows. Specifically methylates the N4 position of cytidine in position 1402 (C1402) of 16S rRNA. This Campylobacter hominis (strain ATCC BAA-381 / DSM 21671 / CCUG 45161 / LMG 19568 / NCTC 13146 / CH001A) protein is Ribosomal RNA small subunit methyltransferase H.